Consider the following 273-residue polypeptide: Salivary glue protein Sgs-3 (273 aa).

An N-terminal signal peptide occupies residues Met-1 to Gly-23. Positions Thr-47 to Pro-57 are enriched in low complexity. The segment at Thr-47–Cys-225 is disordered. A compositionally biased stretch (pro residues) spans Pro-58 to Thr-67. Residues Arg-83–Cys-225 are compositionally biased toward low complexity.

This chain is Salivary glue protein Sgs-3 (Sgs3), found in Drosophila yakuba (Fruit fly).